The chain runs to 388 residues: MRYLTAGESHGQALTAIIEGIPAGLALSAELINKELKRRQGGYGRGARMRIESDRVHISSGVRHGKTTGAPITLTIQNKDHQKWLDIMAVEAVEEQIKFKRKITRPRPGHADLVGGIKYRFDDLRNALERSSARETAMRVAVGAIAKAVLTELGIETANHVLVFGGIEVAVPEAMPFTDIKKAAEASDLSIVNPKQEATIKAHIDQVKKEGDTLGGIIETIIYGLPAGLGSYVQWDRKLDAKIAQTVLSINAFKGVEFGMGFDMGYQKGSQVMDDIIWHETSGYSRRTNRLGGFEAGMTTGQPIVVKGVMKPIPTLYKPLMSVDTETHEPYKATVERSDPTALPAAGVVMENVVATVITKEILEQFPSDNMTDLKQAFFAYRDYVHHF.

NADP(+)-binding residues include R39 and R45. FMN-binding positions include 130–132, 251–252, A296, 311–315, and R337; these read RSS, NA, and KPIPT.

Belongs to the chorismate synthase family. As to quaternary structure, homotetramer. FMNH2 serves as cofactor.

It catalyses the reaction 5-O-(1-carboxyvinyl)-3-phosphoshikimate = chorismate + phosphate. It functions in the pathway metabolic intermediate biosynthesis; chorismate biosynthesis; chorismate from D-erythrose 4-phosphate and phosphoenolpyruvate: step 7/7. Its function is as follows. Catalyzes the anti-1,4-elimination of the C-3 phosphate and the C-6 proR hydrogen from 5-enolpyruvylshikimate-3-phosphate (EPSP) to yield chorismate, which is the branch point compound that serves as the starting substrate for the three terminal pathways of aromatic amino acid biosynthesis. This reaction introduces a second double bond into the aromatic ring system. In Streptococcus equi subsp. zooepidemicus (strain MGCS10565), this protein is Chorismate synthase.